The chain runs to 109 residues: Transcription initiation factor IIA subunit 2 (109 aa).

This sequence belongs to the TFIIA subunit 2 family. In terms of assembly, TFIIA is a heterodimer composed of the large toa1 and the small toa2 subunits.

The protein localises to the nucleus. Its subcellular location is the cytoplasm. In terms of biological role, TFIIA is a component of the transcription machinery of RNA polymerase II and plays an important role in transcriptional activation. TFIIA in a complex with tbp mediates transcriptional activity. The chain is Transcription initiation factor IIA subunit 2 (toa2) from Schizosaccharomyces pombe (strain 972 / ATCC 24843) (Fission yeast).